We begin with the raw amino-acid sequence, 366 residues long: ATP-dependent 6-phosphofructokinase (366 aa).

ATP-binding positions include glycine 16, arginine 78–glutamate 79, and glycine 118–threonine 121. Residues leucine 74–glycine 94 are disordered. A compositionally biased stretch (basic and acidic residues) spans serine 77–glycine 94. Asparagine 119 serves as a coordination point for Mg(2+). Residues threonine 141–aspartate 143, arginine 178, methionine 185–histidine 187, glutamate 238, arginine 282, and tyrosine 288–arginine 291 each bind substrate. The active-site Proton acceptor is aspartate 143.

Belongs to the phosphofructokinase type A (PFKA) family. Mixed-substrate PFK group III subfamily. Homodimer or homotetramer. It depends on Mg(2+) as a cofactor.

The protein resides in the cytoplasm. The catalysed reaction is beta-D-fructose 6-phosphate + ATP = beta-D-fructose 1,6-bisphosphate + ADP + H(+). Its pathway is carbohydrate degradation; glycolysis; D-glyceraldehyde 3-phosphate and glycerone phosphate from D-glucose: step 3/4. Functionally, catalyzes the phosphorylation of D-fructose 6-phosphate to fructose 1,6-bisphosphate by ATP, the first committing step of glycolysis. The sequence is that of ATP-dependent 6-phosphofructokinase from Spirochaeta thermophila (strain ATCC 49972 / DSM 6192 / RI 19.B1).